The chain runs to 95 residues: Protein GOLVEN 9 (95 aa).

A signal peptide spans 1 to 24 (MKKTSLKLMTLVLGFCFVIYLLQG). Residues 25 to 73 (PRGGSRNGDLLIARKLISLEPIETKNAARSLKDSISTDLEEEVDRLMEH) constitute a propeptide that is removed on maturation. The disordered stretch occupies residues 72–95 (EHEYPSPVKPRKRTPVHNGVRNRH). A Sulfotyrosine modification is found at Y75. Residues 80–95 (KPRKRTPVHNGVRNRH) show a composition bias toward basic residues. P86 carries the post-translational modification Hydroxyproline. The propeptide occupies 90-95 (GVRNRH).

It belongs to the RGF family. Binds to LRR receptor-like serine/threonine-protein kinases to trigger their dimerization with SERK proteins and subsequent signaling. In terms of tissue distribution, expressed in roots.

Its subcellular location is the secreted. Functionally, signaling peptide (root growth factor) required during root gravitropism in a PIN2-traffic dependent manner. Regulates the pattern of root growth and lateral root development by modulating the length and the number of cortical cells in the root apical meristem (RAM), and the anticlinal asymmetric cell divisions in lateral root initiation cells. The sequence is that of Protein GOLVEN 9 from Arabidopsis thaliana (Mouse-ear cress).